Consider the following 314-residue polypeptide: MRFKGLDLNLLVALDAVMTARNLTAAARKINLSQPAMSAAIARLRTYFRDELFTMRGRELVPTPGAEALAGPVREALLHIQLSIISRDALDPAQSSRRFRVILSDFMTIVFFRRIVDRMAQEAPAVRFELLPFSDEPDDLLRRGEVDFLILPELFMSSAHPKATLFDESLVCVGCRANKQLSRQLTFEQYISMGHVTAKFGRALRPNLEEWFLLEHGLRRRIEVVVQGFSLIPPLLLDTSRIGTMPLRLARHFEKRMPLRIIQPPLPLPTFTEALQWPSFHNTDPASIWMRRILLEEASNMASGDQEPPTRRRC.

One can recognise an HTH lysR-type domain in the interval 6–63; the sequence is LDLNLLVALDAVMTARNLTAAARKINLSQPAMSAAIARLRTYFRDELFTMRGRELVPT. Positions 23-42 form a DNA-binding region, H-T-H motif; that stretch reads LTAAARKINLSQPAMSAAIA.

The protein belongs to the LysR transcriptional regulatory family.

Its function is as follows. NodD regulates the expression of the nodABCFE genes which encode other nodulation proteins. NodD is also a negative regulator of its own expression. Binds flavonoids as inducers. The chain is Nodulation protein D 1 (nodD1) from Bradyrhizobium diazoefficiens (strain JCM 10833 / BCRC 13528 / IAM 13628 / NBRC 14792 / USDA 110).